Reading from the N-terminus, the 680-residue chain is HEAT repeat-containing protein 3 (680 aa).

Positions 1 to 11 (MGKSRTKRFKR) are enriched in basic residues. Residues 1-39 (MGKSRTKRFKRPQFSPTGDCQAEAAAAANGTGGEEDDGP) are disordered. Ser15 carries the phosphoserine modification. A compositionally biased stretch (low complexity) spans 18–29 (GDCQAEAAAAAN). 2 HEAT repeats span residues 38-69 (GPAAELLEKLQHPSAEVRECACAGLARLVQQR) and 74-110 (GLARRDAVRRLGPLLLDPSLAVRETAAGALRNLSACG). Residue Ser144 is modified to Phosphoserine. Thr340 bears the Phosphothreonine mark.

It belongs to the nuclear import and ribosome assembly adapter family. As to quaternary structure, component of a hexameric 5S RNP precursor complex, composed of 5S RNA, RRS1, RPF2/BXDC1, RPL5, RPL11 and HEATR3; this complex acts as a precursor for ribosome assembly.

Its function is as follows. Plays a role in ribosome biogenesis and in nuclear import of the 60S ribosomal protein L5/large ribosomal subunit protein uL18 (RPL5). Required for proper erythrocyte maturation. The sequence is that of HEAT repeat-containing protein 3 (HEATR3) from Homo sapiens (Human).